Reading from the N-terminus, the 177-residue chain is Cytidylate kinase (177 aa).

8–16 serves as a coordination point for ATP; the sequence is GPPGGGKTT.

Belongs to the cytidylate kinase family. Type 2 subfamily.

The protein localises to the cytoplasm. It carries out the reaction CMP + ATP = CDP + ADP. The enzyme catalyses dCMP + ATP = dCDP + ADP. This Staphylothermus marinus (strain ATCC 43588 / DSM 3639 / JCM 9404 / F1) protein is Cytidylate kinase.